We begin with the raw amino-acid sequence, 235 residues long: Phosphoribosylaminoimidazole-succinocarboxamide synthase (235 aa).

It belongs to the SAICAR synthetase family.

The catalysed reaction is 5-amino-1-(5-phospho-D-ribosyl)imidazole-4-carboxylate + L-aspartate + ATP = (2S)-2-[5-amino-1-(5-phospho-beta-D-ribosyl)imidazole-4-carboxamido]succinate + ADP + phosphate + 2 H(+). Its pathway is purine metabolism; IMP biosynthesis via de novo pathway; 5-amino-1-(5-phospho-D-ribosyl)imidazole-4-carboxamide from 5-amino-1-(5-phospho-D-ribosyl)imidazole-4-carboxylate: step 1/2. This Streptococcus thermophilus (strain ATCC BAA-491 / LMD-9) protein is Phosphoribosylaminoimidazole-succinocarboxamide synthase.